A 393-amino-acid polypeptide reads, in one-letter code: NAD(P)H-quinone oxidoreductase subunit H, chloroplastic (393 aa).

This sequence belongs to the complex I 49 kDa subunit family. As to quaternary structure, NDH is composed of at least 16 different subunits, 5 of which are encoded in the nucleus.

It is found in the plastid. It localises to the chloroplast thylakoid membrane. The enzyme catalyses a plastoquinone + NADH + (n+1) H(+)(in) = a plastoquinol + NAD(+) + n H(+)(out). It carries out the reaction a plastoquinone + NADPH + (n+1) H(+)(in) = a plastoquinol + NADP(+) + n H(+)(out). In terms of biological role, NDH shuttles electrons from NAD(P)H:plastoquinone, via FMN and iron-sulfur (Fe-S) centers, to quinones in the photosynthetic chain and possibly in a chloroplast respiratory chain. The immediate electron acceptor for the enzyme in this species is believed to be plastoquinone. Couples the redox reaction to proton translocation, and thus conserves the redox energy in a proton gradient. This Crucihimalaya wallichii (Rock-cress) protein is NAD(P)H-quinone oxidoreductase subunit H, chloroplastic.